The chain runs to 396 residues: Elongation factor Tu (396 aa).

A tr-type G domain is found at 10 to 205; that stretch reads KPHVNIGTIG…ACDDSIPDPE (196 aa). Residues 19 to 26 are G1; it reads GHVDHGKT. Residue 19–26 coordinates GTP; sequence GHVDHGKT. Thr-26 lines the Mg(2+) pocket. The tract at residues 62–66 is G2; that stretch reads GITIN. The interval 83-86 is G3; the sequence is DAPG. GTP contacts are provided by residues 83-87 and 138-141; these read DAPGH and NKCD. Residues 138–141 form a G4 region; sequence NKCD. The G5 stretch occupies residues 175–177; that stretch reads SAL.

Belongs to the TRAFAC class translation factor GTPase superfamily. Classic translation factor GTPase family. EF-Tu/EF-1A subfamily. As to quaternary structure, monomer.

Its subcellular location is the cytoplasm. It catalyses the reaction GTP + H2O = GDP + phosphate + H(+). In terms of biological role, GTP hydrolase that promotes the GTP-dependent binding of aminoacyl-tRNA to the A-site of ribosomes during protein biosynthesis. This chain is Elongation factor Tu, found in Corynebacterium diphtheriae (strain ATCC 700971 / NCTC 13129 / Biotype gravis).